Here is a 128-residue protein sequence, read N- to C-terminus: Holo-[acyl-carrier-protein] synthase (128 aa).

Residues Asp-8 and Glu-60 each contribute to the Mg(2+) site.

Belongs to the P-Pant transferase superfamily. AcpS family. It depends on Mg(2+) as a cofactor.

It is found in the cytoplasm. The enzyme catalyses apo-[ACP] + CoA = holo-[ACP] + adenosine 3',5'-bisphosphate + H(+). Its function is as follows. Transfers the 4'-phosphopantetheine moiety from coenzyme A to a Ser of acyl-carrier-protein. The protein is Holo-[acyl-carrier-protein] synthase of Anaeromyxobacter dehalogenans (strain 2CP-C).